The chain runs to 420 residues: Light-independent protochlorophyllide reductase subunit N (420 aa).

[4Fe-4S] cluster-binding residues include C21, C46, and C103.

The protein belongs to the BchN/ChlN family. Protochlorophyllide reductase is composed of three subunits; BchL, BchN and BchB. Forms a heterotetramer of two BchB and two BchN subunits. [4Fe-4S] cluster serves as cofactor.

It catalyses the reaction chlorophyllide a + oxidized 2[4Fe-4S]-[ferredoxin] + 2 ADP + 2 phosphate = protochlorophyllide a + reduced 2[4Fe-4S]-[ferredoxin] + 2 ATP + 2 H2O. The protein operates within porphyrin-containing compound metabolism; bacteriochlorophyll biosynthesis (light-independent). Its function is as follows. Component of the dark-operative protochlorophyllide reductase (DPOR) that uses Mg-ATP and reduced ferredoxin to reduce ring D of protochlorophyllide (Pchlide) to form chlorophyllide a (Chlide). This reaction is light-independent. The NB-protein (BchN-BchB) is the catalytic component of the complex. The polypeptide is Light-independent protochlorophyllide reductase subunit N (Chlorobium phaeobacteroides (strain DSM 266 / SMG 266 / 2430)).